Consider the following 277-residue polypeptide: Sulfur carrier protein FdhD (277 aa).

The active-site Cysteine persulfide intermediate is Cys121. 260–265 (FCKPGR) is a Mo-bis(molybdopterin guanine dinucleotide) binding site.

The protein belongs to the FdhD family.

It localises to the cytoplasm. In terms of biological role, required for formate dehydrogenase (FDH) activity. Acts as a sulfur carrier protein that transfers sulfur from IscS to the molybdenum cofactor prior to its insertion into FDH. This chain is Sulfur carrier protein FdhD, found in Escherichia coli O8 (strain IAI1).